We begin with the raw amino-acid sequence, 408 residues long: Protein ZNF365 (408 aa).

Position 16 is a phosphoserine (Ser-16). The C2H2-type; degenerate zinc finger occupies 26–51; the sequence is FRCPRCGDHTRFRSLSSLRAHLEFSH. Phosphoserine occurs at positions 139 and 146. Positions 170–298 form a coiled coil; that stretch reads VEAVDRTIEK…QLEYYQSQQA (129 aa). Thr-176 bears the Phosphothreonine mark. Ser-370 carries the phosphoserine modification.

In terms of assembly, homodimers. Interacts with NDE1 and NDEL1. Interacts with DISC1. Interacts with PARP1. Interacts with MCRS1. As to expression, expressed in cerebral cortex, hippocampus, olfactory tubercle and striatum.

The protein resides in the cytoplasm. Its subcellular location is the cytoskeleton. The protein localises to the microtubule organizing center. It localises to the centrosome. Its function is as follows. Involved in the positive regulation of oligodendrocyte differentiation during postnatal growth. Involved in the morphogenesis of basket cells in the somatosensory cortex during embryogenesis. Involved in dendritic arborization, morphogenesis of spine density dendrite, and establishment of postsynaptic dendrite density in cortical pyramidal neurons. Involved in the regulation of neurogenesis. Negatively regulates neurite outgrowth. Involved in homologous recombination (HR) repair pathway. Required for proper resolution of DNA double-strand breaks (DSBs) by HR. Is required for recovery of stalled replication forks, and directly contributes to genomic stability. Interacts with PARP1 and mediates MRE11-dependent DNA end resection during replication fork recovery. Contributes to genomic stability by preventing telomere dysfunction. This chain is Protein ZNF365 (Znf365), found in Rattus norvegicus (Rat).